The following is a 624-amino-acid chain: Chromosomal replication initiator protein DnaA (624 aa).

The interval 1–99 (MADVPADLAA…SAGEPPSPPA (99 aa)) is domain I, interacts with DnaA modulators. A disordered region spans residues 88–284 (DDSAGEPPSP…APGPGEPHAR (197 aa)). Residues 100–283 (PPMHQSHQSQ…PAPGPGEPHA (184 aa)) are domain II. Over residues 102-112 (MHQSHQSQQGH) the composition is skewed to low complexity. 2 stretches are compositionally biased toward basic and acidic residues: residues 118–141 (QRDDAPRGDAYDGYGHRPSDDGMP) and 176–206 (GYQDREQPSGEPYRESESYRERENEQYREQA). Residues 250–264 (PRQGGHGPGRTGGSV) are compositionally biased toward gly residues. Residues 284–500 (RLNPKYLFDT…GALIRVTAFA (217 aa)) form a domain III, AAA+ region region. ATP contacts are provided by glycine 328, glycine 330, lysine 331, and threonine 332. Residues 501 to 624 (SLNRQPVDLG…TELTNRIKNG (124 aa)) form a domain IV, binds dsDNA region.

This sequence belongs to the DnaA family. In terms of assembly, oligomerizes as a right-handed, spiral filament on DNA at oriC.

It is found in the cytoplasm. Functionally, plays an essential role in the initiation and regulation of chromosomal replication. ATP-DnaA binds to the origin of replication (oriC) to initiate formation of the DNA replication initiation complex once per cell cycle. Binds the DnaA box (a 9 base pair repeat at the origin) and separates the double-stranded (ds)DNA. Forms a right-handed helical filament on oriC DNA; dsDNA binds to the exterior of the filament while single-stranded (ss)DNA is stabiized in the filament's interior. The ATP-DnaA-oriC complex binds and stabilizes one strand of the AT-rich DNA unwinding element (DUE), permitting loading of DNA polymerase. After initiation quickly degrades to an ADP-DnaA complex that is not apt for DNA replication. Binds acidic phospholipids. The DnaA box consensus is 5'-(T/C)(T/C)(G/AC)TCCACA-3'. This is Chromosomal replication initiator protein DnaA from Streptomyces anulatus (Streptomyces chrysomallus).